Consider the following 232-residue polypeptide: MLSGDIPPNQTVYLRNLNEKVKKEELKRSLYALCSQYGRILDVVALKTPKLRGQAWVVFSEITAATNAFRGLQEFDFYGKRMRVQYAKTRSDCLATEDGSTAPKEKRKKQEEKAAEKKRRAEEAQQSGPNAAAQSNGTGYQASRLGKTSQEPPAPPNNILFIQNLPAETTSMMLQILFQQYPGFREVRMIEAKPGIAFVEYEDDSQSMVAMQALQGFKITPYNPMAISYAKK.

In terms of domain architecture, RRM 1 spans Gln-10–Thr-89. A disordered region spans residues Arg-90 to Ile-159. A compositionally biased stretch (basic and acidic residues) spans Lys-108–Glu-123. Over residues Ser-127–Glu-151 the composition is skewed to polar residues. The RRM 2 domain occupies Asn-158–Lys-232.

The protein belongs to the RRM U1 A/B'' family. Component of the spliceosome where it is associated with snRNP U2.

The protein resides in the nucleus. It localises to the cajal body. The protein localises to the nucleoplasm. Its subcellular location is the cytoplasm. Functionally, involved in nuclear pre-mRNA splicing. This Oryza sativa subsp. japonica (Rice) protein is U2 small nuclear ribonucleoprotein B''.